A 196-amino-acid polypeptide reads, in one-letter code: UPF0319 protein VV0948 (196 aa).

Residues 1–19 form the signal peptide; sequence MKKMMILSALALFSSSLFA.

This sequence belongs to the UPF0319 family.

In Vibrio vulnificus (strain YJ016), this protein is UPF0319 protein VV0948.